Consider the following 561-residue polypeptide: Transmembrane protein 151B (561 aa).

Positions 1–10 (MSPPGSAAGE) are enriched in low complexity. Positions 1-42 (MSPPGSAAGESAGGGGGGGGSGVPEEPMASADEGPAREEQRP) are disordered. The segment covering 11–22 (SAGGGGGGGGSG) has biased composition (gly residues). 2 helical membrane-spanning segments follow: residues 59-79 (CLLLSLLMYGCLGAVAWCHVT) and 106-126 (YVYIPLAFLLMLYAVYLVECW). Polar residues predominate over residues 489-507 (VNEASCPTEQTRLSSQASM). The interval 489–523 (VNEASCPTEQTRLSSQASMRDNEEDEDEEEAGPPP) is disordered. Residues 510–519 (NEEDEDEEEA) show a composition bias toward acidic residues.

The protein belongs to the TMEM151 family.

It localises to the membrane. The chain is Transmembrane protein 151B (Tmem151b) from Mus musculus (Mouse).